The sequence spans 246 residues: Serine protease 1 (246 aa).

The signal sequence occupies residues 1-15 (MKTFIFLALLGATVA). Residues 16-23 (FPIDDDDK) constitute a propeptide, activation peptide. The region spanning 24-244 (IVGGYTCSRN…YVSWIQQTIA (221 aa)) is the Peptidase S1 domain. 6 disulfide bridges follow: C30-C160, C48-C64, C132-C233, C139-C206, C171-C185, and C196-C220. The Charge relay system role is filled by H63. E75, N77, V80, and E85 together coordinate Ca(2+). The active-site Charge relay system is the D107. S200 (charge relay system) is an active-site residue.

The protein belongs to the peptidase S1 family. As to quaternary structure, interacts with SERPINA1. The cofactor is Ca(2+).

Its subcellular location is the secreted. It is found in the extracellular space. It catalyses the reaction Preferential cleavage: Arg-|-Xaa, Lys-|-Xaa.. In Canis lupus familiaris (Dog), this protein is Serine protease 1.